We begin with the raw amino-acid sequence, 403 residues long: GPI-N-acetylgalactosamine transferase PGAP4 (403 aa).

Topologically, residues 1–22 are cytoplasmic; it reads MSTSTSPAAMLLRRLRRLSWGS. Residues 23-43 traverse the membrane as a helical segment; it reads TAVQLFILTVVTFGLLAPLAC. At 44–259 the chain is on the lumenal side; the sequence is HRLLHSYFYL…RLQHYINPEP (216 aa). The N-linked (GalNAc...) asparagine glycan is linked to Asn-87. Residue Val-109 participates in UDP-N-acetyl-alpha-D-galactosamine binding. Cystine bridges form between Cys-132-Cys-136 and Cys-144-Cys-194. The short motif at 211-213 is the DXD motif element; the sequence is EDD. Residues 260–280 form a helical membrane-spanning segment; the sequence is MRILEWVGVGMLLGPLLTWIY. The Cytoplasmic segment spans residues 281–287; it reads MRFASRP. Residues 288–308 traverse the membrane as a helical segment; it reads GFSWPVMLFFSLYSMGLVELV. Residues 309 to 403 lie on the Lumenal side of the membrane; the sequence is GRHYFLELRR…LRYNFHPSLL (95 aa). Residues Cys-332 and Cys-333 are joined by a disulfide bond. UDP-N-acetyl-alpha-D-galactosamine-binding residues include Thr-334, Pro-335, and Lys-362.

Belongs to the PGAP4 family. Post-translationally, glycosylated.

The protein resides in the golgi apparatus membrane. In terms of biological role, golgi-resident glycosylphosphatidylinositol (GPI)-N-acetylgalactosamine transferase that catalyzes the N-acetyl-beta-D-galactosamine transfer from an UDP-N-acetyl-alpha-D-galactosamine to the 4-OH-position of the first mannose of the glycosylphosphatidylinositol (GPI) of a GPI-anchored protein (GPI-AP). This modification occurs after the fatty acid remodeling step of the GPI-anchor maturation. This Homo sapiens (Human) protein is GPI-N-acetylgalactosamine transferase PGAP4.